We begin with the raw amino-acid sequence, 271 residues long: Tryptophan synthase alpha chain (271 aa).

Catalysis depends on proton acceptor residues glutamate 53 and aspartate 64.

This sequence belongs to the TrpA family. In terms of assembly, tetramer of two alpha and two beta chains.

It catalyses the reaction (1S,2R)-1-C-(indol-3-yl)glycerol 3-phosphate + L-serine = D-glyceraldehyde 3-phosphate + L-tryptophan + H2O. The protein operates within amino-acid biosynthesis; L-tryptophan biosynthesis; L-tryptophan from chorismate: step 5/5. Functionally, the alpha subunit is responsible for the aldol cleavage of indoleglycerol phosphate to indole and glyceraldehyde 3-phosphate. This Streptomyces coelicolor (strain ATCC BAA-471 / A3(2) / M145) protein is Tryptophan synthase alpha chain.